We begin with the raw amino-acid sequence, 286 residues long: uncharacterized protein (286 aa).

Disordered regions lie at residues methionine 1–valine 38, histidine 108–lysine 146, arginine 196–leucine 227, and aspartate 241–serine 286. A compositionally biased stretch (low complexity) spans serine 18–serine 29. Basic and acidic residues predominate over residues aspartate 243 to histidine 268. Over residues glutamate 269–serine 278 the composition is skewed to polar residues.

This is an uncharacterized protein from Caenorhabditis elegans.